A 388-amino-acid chain; its full sequence is Succinate--CoA ligase [ADP-forming] subunit beta (388 aa).

The 237-residue stretch at 9–245 (KELLKSYGLP…KSQENERELK (237 aa)) folds into the ATP-grasp domain. Residues Lys-46, 53–55 (GRG), Glu-100, Tyr-103, and Glu-108 contribute to the ATP site. Mg(2+) contacts are provided by Asn-200 and Asp-214. Substrate is bound by residues Asn-265 and 322-324 (GIV).

It belongs to the succinate/malate CoA ligase beta subunit family. Heterotetramer of two alpha and two beta subunits. Mg(2+) is required as a cofactor.

It catalyses the reaction succinate + ATP + CoA = succinyl-CoA + ADP + phosphate. The enzyme catalyses GTP + succinate + CoA = succinyl-CoA + GDP + phosphate. It participates in carbohydrate metabolism; tricarboxylic acid cycle; succinate from succinyl-CoA (ligase route): step 1/1. Functionally, succinyl-CoA synthetase functions in the citric acid cycle (TCA), coupling the hydrolysis of succinyl-CoA to the synthesis of either ATP or GTP and thus represents the only step of substrate-level phosphorylation in the TCA. The beta subunit provides nucleotide specificity of the enzyme and binds the substrate succinate, while the binding sites for coenzyme A and phosphate are found in the alpha subunit. This chain is Succinate--CoA ligase [ADP-forming] subunit beta, found in Psychrobacter arcticus (strain DSM 17307 / VKM B-2377 / 273-4).